Here is a 496-residue protein sequence, read N- to C-terminus: Squalene epoxidase ERG1 (496 aa).

Residues 4 to 24 traverse the membrane as a helical segment; the sequence is VKYDAIIIGAGVIGPTIATAF. FAD is bound by residues 15–16, 35–36, Arg-43, Arg-148, Val-164, Asp-332, and Met-345; these read VI and ER. A run of 2 helical transmembrane segments spans residues 431-451 and 466-486; these read IGLL…FFSV and LGFP…IVIF.

It belongs to the squalene monooxygenase family. FAD serves as cofactor.

It is found in the microsome membrane. The protein resides in the endoplasmic reticulum membrane. The enzyme catalyses squalene + reduced [NADPH--hemoprotein reductase] + O2 = (S)-2,3-epoxysqualene + oxidized [NADPH--hemoprotein reductase] + H2O + H(+). Its pathway is terpene metabolism; lanosterol biosynthesis; lanosterol from farnesyl diphosphate: step 2/3. Its activity is regulated as follows. Activity is completely abolished by Triton X-100, deoxycholate or Cu(2+), and partially inhibited by thiol reagents, rotenone and antimycin A. The allylamine antimycotic agents naftifine and SF 86-327are potent inhibitors and show apparently non-competitive kinetics with respect to the substrate squalene. In terms of biological role, squalene epoxidase; part of the third module of ergosterol biosynthesis pathway that includes the late steps of the pathway. Erg1 catalyzes the epoxidation of squalene into 2,3-epoxysqualene. The third module or late pathway involves the ergosterol synthesis itself through consecutive reactions that mainly occur in the endoplasmic reticulum (ER) membrane. Firstly, the squalene synthase ERG9 catalyzes the condensation of 2 farnesyl pyrophosphate moieties to form squalene, which is the precursor of all steroids. Squalene synthase is crucial for balancing the incorporation of farnesyl diphosphate (FPP) into sterol and nonsterol isoprene synthesis. Secondly, the squalene epoxidase ERG1 catalyzes the stereospecific oxidation of squalene to (S)-2,3-epoxysqualene, which is considered to be a rate-limiting enzyme in steroid biosynthesis. Then, the lanosterol synthase ERG7 catalyzes the cyclization of (S)-2,3 oxidosqualene to lanosterol, a reaction that forms the sterol core. In the next steps, lanosterol is transformed to zymosterol through a complex process involving various demethylation, reduction and desaturation reactions. The lanosterol 14-alpha-demethylase ERG11 (also known as CYP51) catalyzes C14-demethylation of lanosterol to produce 4,4'-dimethyl cholesta-8,14,24-triene-3-beta-ol, which is critical for ergosterol biosynthesis. The C-14 reductase ERG24 reduces the C14=C15 double bond of 4,4-dimethyl-cholesta-8,14,24-trienol to produce 4,4-dimethyl-cholesta-8,24-dienol. 4,4-dimethyl-cholesta-8,24-dienol is substrate of the C-4 demethylation complex ERG25-ERG26-ERG27 in which ERG25 catalyzes the three-step monooxygenation required for the demethylation of 4,4-dimethyl and 4alpha-methylsterols, ERG26 catalyzes the oxidative decarboxylation that results in a reduction of the 3-beta-hydroxy group at the C-3 carbon to an oxo group, and ERG27 is responsible for the reduction of the keto group on the C-3. ERG28 has a role as a scaffold to help anchor ERG25, ERG26 and ERG27 to the endoplasmic reticulum and ERG29 regulates the activity of the iron-containing C4-methylsterol oxidase ERG25. Then, the sterol 24-C-methyltransferase ERG6 catalyzes the methyl transfer from S-adenosyl-methionine to the C-24 of zymosterol to form fecosterol. The C-8 sterol isomerase ERG2 catalyzes the reaction which results in unsaturation at C-7 in the B ring of sterols and thus converts fecosterol to episterol. The sterol-C5-desaturase ERG3 then catalyzes the introduction of a C-5 double bond in the B ring to produce 5-dehydroepisterol. The C-22 sterol desaturase ERG5 further converts 5-dehydroepisterol into ergosta-5,7,22,24(28)-tetraen-3beta-ol by forming the C-22(23) double bond in the sterol side chain. Finally, ergosta-5,7,22,24(28)-tetraen-3beta-ol is substrate of the C-24(28) sterol reductase ERG4 to produce ergosterol. The sequence is that of Squalene epoxidase ERG1 from Candida albicans (strain SC5314 / ATCC MYA-2876) (Yeast).